The primary structure comprises 272 residues: 3-methyl-2-oxobutanoate hydroxymethyltransferase (272 aa).

Mg(2+)-binding residues include Asp-42 and Asp-86. Residues 42–43 (DS), Asp-86, and Lys-116 each bind 3-methyl-2-oxobutanoate. Glu-118 contacts Mg(2+). Glu-185 acts as the Proton acceptor in catalysis. Positions 251–272 (LKEQRDQRATPTTPPPPPAPDC) are disordered. A compositionally biased stretch (pro residues) spans 262–272 (TTPPPPPAPDC).

The protein belongs to the PanB family. Homodecamer; pentamer of dimers. Requires Mg(2+) as cofactor.

It localises to the cytoplasm. The catalysed reaction is 3-methyl-2-oxobutanoate + (6R)-5,10-methylene-5,6,7,8-tetrahydrofolate + H2O = 2-dehydropantoate + (6S)-5,6,7,8-tetrahydrofolate. The protein operates within cofactor biosynthesis; (R)-pantothenate biosynthesis; (R)-pantoate from 3-methyl-2-oxobutanoate: step 1/2. In terms of biological role, catalyzes the reversible reaction in which hydroxymethyl group from 5,10-methylenetetrahydrofolate is transferred onto alpha-ketoisovalerate to form ketopantoate. This chain is 3-methyl-2-oxobutanoate hydroxymethyltransferase, found in Synechococcus sp. (strain CC9311).